Reading from the N-terminus, the 928-residue chain is MVQIPQNPLILVDGSSYLYRAYHAFPPLTNSAGEPTGAMYGVLNMLRSLIMQYKPTHAAVVFDAKGKTFRDELFEHYKSHRPPMPDDLRAQIEPLHAMVKAMGLPLLAVSGVEADDVIGTLAREAEKAGRPVLISTGDKDMAQLVTPNITLINTMTNTILGPEEVVNKYGVPPELIIDFLALMGDSSDNIPGVPGVGEKTAQALLQGLGGLDTLYAEPEKIAGLSFRGAKTMAAKLEQNKEVAYLSYQLATIKTDVELELTCEQLEVQQPAAEELLGLFKKYEFKRWTADVEAGKWLQAKGAKPAAKPQETSVADEAPEVTATVISYDNYVTILDEETLKAWIAKLEKAPVFAFDTETDSLDNISANLVGLSFAIEPGVAAYIPVAHDYLDAPDQISRERALELLKPLLEDEKALKVGQNLKYDRGILANYGIELRGIAFDTMLESYILNSVAGRHDMDSLAERWLKHKTITFEEIAGKGKNQLTFNQIALEEAGRYAAEDADVTLQLHLKMWPDLQKHKGPLNVFENIEMPLVPVLSRIERNGVKIDPKVLHNHSEELTLRLAELEKKAHEIAGEEFNLSSTKQLQTILFEKQGIKPLKKTPGGAPSTSEEVLEELALDYPLPKVILEYRGLAKLKSTYTDKLPLMINPKTGRVHTSYHQAVTATGRLSSTDPNLQNIPVRNEEGRRIRQAFIAPEDYVIVSADYSQIELRIMAHLSRDKGLLTAFAEGKDIHRATAAEVFGLPLETVTSEQRRSAKAINFGLIYGMSAFGLARQLNIPRKEAQKYMDLYFERYPGVLEYMERTRAQAKEQGYVETLDGRRLYLPDIKSSNGARRAAAERAAINAPMQGTAADIIKRAMIAVDAWLQAEQPRVRMIMQVHDELVFEVHKDDVDAVAKQIHQLMENCTRLDVPLLVEVGSGENWDQAH.

One can recognise a 5'-3' exonuclease domain in the interval 1–323; it reads MVQIPQNPLI…ADEAPEVTAT (323 aa). The region spanning 324-517 is the 3'-5' exonuclease domain; the sequence is VISYDNYVTI…LHLKMWPDLQ (194 aa). A klenow fragment region spans residues 324 to 928; it reads VISYDNYVTI…GSGENWDQAH (605 aa). The tract at residues 521-928 is polymerase; that stretch reads GPLNVFENIE…GSGENWDQAH (408 aa).

Belongs to the DNA polymerase type-A family. Single-chain monomer with multiple functions.

The catalysed reaction is DNA(n) + a 2'-deoxyribonucleoside 5'-triphosphate = DNA(n+1) + diphosphate. In terms of biological role, in addition to polymerase activity, this DNA polymerase exhibits 3'-5' and 5'-3' exonuclease activity. It is able to utilize nicked circular duplex DNA as a template and can unwind the parental DNA strand from its template. Its function is as follows. Genetic interactions among priB, dam, lexA, nagC, polA, rdgB, rdgB, rep and uup link the PriA-PriB replication restart pathway to DNA double-strand break repair. The sequence is that of DNA polymerase I (polA) from Escherichia coli (strain K12).